The chain runs to 229 residues: Phosphatidylinositol N-acetylglucosaminyltransferase subunit GPI15 (229 aa).

A run of 2 helical transmembrane segments spans residues 59–79 and 101–121; these read IQYH…VICL and ILII…GPSV.

The protein belongs to the PIGH family. As to quaternary structure, component of the phosphatidylinositol N-acetylglucosaminyltransferase (GPI-GlcNAc transferase) complex composed of at least GPI1, GPI2, GPI3, GPI15, GPI19 and ERI1.

Its subcellular location is the membrane. The enzyme catalyses a 1,2-diacyl-sn-glycero-3-phospho-(1D-myo-inositol) + UDP-N-acetyl-alpha-D-glucosamine = a 6-(N-acetyl-alpha-D-glucosaminyl)-1-(1,2-diacyl-sn-glycero-3-phospho)-1D-myo-inositol + UDP + H(+). It participates in glycolipid biosynthesis; glycosylphosphatidylinositol-anchor biosynthesis. Its function is as follows. Part of the complex catalyzing the transfer of N-acetylglucosamine from UDP-N-acetylglucosamine to phosphatidylinositol, the first step of GPI biosynthesis. The polypeptide is Phosphatidylinositol N-acetylglucosaminyltransferase subunit GPI15 (GPI15) (Saccharomyces cerevisiae (strain ATCC 204508 / S288c) (Baker's yeast)).